The primary structure comprises 205 residues: Small ribosomal subunit protein uS4 (205 aa).

Basic and acidic residues predominate over residues 1 to 16; that stretch reads MSKRESSKYKIDRRMG. The segment at 1–46 is disordered; it reads MSKRESSKYKIDRRMGENIWGRPKSPVNRREYGPGQHGQRRKGKLS. Positions 94–157 constitute an S4 RNA-binding domain; it reads SRLDAIVYRA…KQLVIVLEAV (64 aa).

It belongs to the universal ribosomal protein uS4 family. As to quaternary structure, part of the 30S ribosomal subunit. Contacts protein S5. The interaction surface between S4 and S5 is involved in control of translational fidelity.

In terms of biological role, one of the primary rRNA binding proteins, it binds directly to 16S rRNA where it nucleates assembly of the body of the 30S subunit. With S5 and S12 plays an important role in translational accuracy. The polypeptide is Small ribosomal subunit protein uS4 (Rhizobium leguminosarum bv. trifolii (strain WSM2304)).